The sequence spans 326 residues: Aspartate carbamoyltransferase catalytic subunit (326 aa).

Carbamoyl phosphate contacts are provided by R60 and T61. K88 is a binding site for L-aspartate. Residues R110, H143, and Q146 each contribute to the carbamoyl phosphate site. Residues R183 and R239 each contribute to the L-aspartate site. Carbamoyl phosphate is bound by residues G280 and P281.

Belongs to the aspartate/ornithine carbamoyltransferase superfamily. ATCase family. Heterododecamer (2C3:3R2) of six catalytic PyrB chains organized as two trimers (C3), and six regulatory PyrI chains organized as three dimers (R2).

It carries out the reaction carbamoyl phosphate + L-aspartate = N-carbamoyl-L-aspartate + phosphate + H(+). It participates in pyrimidine metabolism; UMP biosynthesis via de novo pathway; (S)-dihydroorotate from bicarbonate: step 2/3. Its function is as follows. Catalyzes the condensation of carbamoyl phosphate and aspartate to form carbamoyl aspartate and inorganic phosphate, the committed step in the de novo pyrimidine nucleotide biosynthesis pathway. This is Aspartate carbamoyltransferase catalytic subunit from Microcystis aeruginosa (strain NIES-843 / IAM M-2473).